The sequence spans 359 residues: NAC transcription factor 47 (359 aa).

The region spanning 10 to 186 (LPPGFRFHPT…DWVLCRIYKK (177 aa)) is the NAC domain. The DNA-binding element occupies 112–192 (IGIKKALVFY…IYKKSHASLS (81 aa)). 2 disordered regions span residues 147–166 (KRINSSRSGGSEVNNNFGDR) and 200–226 (TSNQEHEENDNEPFVDRGTFLPNLQND). A compositionally biased stretch (polar residues) spans 148–165 (RINSSRSGGSEVNNNFGD).

It localises to the nucleus. Transcription factor that binds to the promoter of ACO5, an ACC oxidase involved in ethylene biosynthesis. Mediates waterlogging-induced hyponastic leaf movement, and cell expansion in abaxial cells of the basal petiole region, by directly regulating the expression of ACO5. Required for normal seed development and morphology. This Arabidopsis thaliana (Mouse-ear cress) protein is NAC transcription factor 47.